Here is a 1097-residue protein sequence, read N- to C-terminus: Importin-5 (1097 aa).

N-acetylalanine is present on alanine 2. HEAT repeat units follow at residues 5–38, 43–77, 95–122, 130–157, 167–201, 210–246, 254–289, 298–350, 352–386, 390–430, 432–472, 475–523, 525–568, 570–615, 617–692, 695–737, 741–780, 787–853, 856–895, 903–935, 943–983, 990–1021, 1032–1067, and 1070–1093; these read AAEQ…NIPG, TFLL…FDEV, MIIQ…NLID, PEGL…IFWN, QHYL…AAFI, LFKH…IADT, HLEA…LSET, TNIV…ACGL, GKLV…SAIG, HQQM…ATDF, PGFQ…FTED, KSLL…ADTA, EKFV…GLAV, KEKF…CKIL, KEFQ…AKEL, GFVE…ARVR, YLTQ…IEVM, NEHF…FSSY, KVLP…IEHC, AEYF…MAQY, FCTE…MKFK, EEVL…DLIE, NTNL…VVRQ, and TSGG…IQEL. Residues 28–99 enclose the Importin N-terminal domain; the sequence is QAEETYENIP…KSELLMIIQM (72 aa). The segment at 325-375 is ran-GTP binding; sequence DELEDDDFDSNAVAGESALDRMACGLGGKLVLPMIKEHIMQMLQNPDWKYR. Position 827 is a phosphoserine (serine 827).

This sequence belongs to the importin beta family. Importin beta-3 subfamily. As to quaternary structure, interacts with RPS7 and RPL5. Interacts with RPL23A (via BIB domain). Interacts with H2A, H2B, H3 and H4 histones. Interacts with CPEB3; this mediates CPEB3 nuclear import following neuronal stimulation which enhances the interaction in a RAN-regulated manner. Interacts with AIFM2; this interaction likely mediates the translocation of AIFM2 into the nucleus upon oxidative stress. Interacts with STX3 (isoform 3). Interacts with SRP19. In terms of assembly, (Microbial infection) Interacts with HIV-1 Rev.

It is found in the cytoplasm. It localises to the nucleus. The protein localises to the nucleolus. Functionally, functions in nuclear protein import as nuclear transport receptor. Serves as receptor for nuclear localization signals (NLS) in cargo substrates. Is thought to mediate docking of the importin/substrate complex to the nuclear pore complex (NPC) through binding to nucleoporin and the complex is subsequently translocated through the pore by an energy requiring, Ran-dependent mechanism. At the nucleoplasmic side of the NPC, Ran binds to the importin, the importin/substrate complex dissociates and importin is re-exported from the nucleus to the cytoplasm where GTP hydrolysis releases Ran. The directionality of nuclear import is thought to be conferred by an asymmetric distribution of the GTP- and GDP-bound forms of Ran between the cytoplasm and nucleus. Mediates the nuclear import of ribosomal proteins RPL23A, RPS7 and RPL5. In vitro, mediates nuclear import of H2A, H2B, H3 and H4 histones. Binds to CPEB3 and mediates its nuclear import following neuronal stimulation. In case of HIV-1 infection, binds and mediates the nuclear import of HIV-1 Rev. This is Importin-5 (IPO5) from Homo sapiens (Human).